Reading from the N-terminus, the 254-residue chain is Undecaprenyl-diphosphatase (254 aa).

8 helical membrane passes run 1–21 (MDII…FLPI), 41–61 (LTKA…MLIY), 70–90 (IDLW…GFIF), 97–117 (LFNV…FLIV), 134–154 (VSWT…IPGT), 175–195 (AEFS…YDLL), 209–229 (FLIG…LFLV), and 234–254 (FTFV…LMIL).

This sequence belongs to the UppP family.

It localises to the cell inner membrane. The enzyme catalyses di-trans,octa-cis-undecaprenyl diphosphate + H2O = di-trans,octa-cis-undecaprenyl phosphate + phosphate + H(+). Functionally, catalyzes the dephosphorylation of undecaprenyl diphosphate (UPP). Confers resistance to bacitracin. In Sulfurovum sp. (strain NBC37-1), this protein is Undecaprenyl-diphosphatase.